The following is a 243-amino-acid chain: Membrane protein US21 (243 aa).

7 helical membrane-spanning segments follow: residues 20-40 (ILIW…WLVL), 47-67 (LFSS…CLGL), 80-100 (WILL…GFHF), 106-126 (IYAM…TYLF), 143-163 (LILL…EILV), 164-184 (MIAG…DILH), and 192-212 (IPGA…VLYF).

The protein belongs to the cytomegalovirus US12 family.

The protein localises to the host membrane. The polypeptide is Membrane protein US21 (US21) (Human cytomegalovirus (strain Merlin) (HHV-5)).